Reading from the N-terminus, the 194-residue chain is MEQVVLLNDSGQAIGVTDKATVHHLDTPLHLAFSCYVFNGRGQLLLTQRAHEKRTWPGVWTNTCCGHPAPQEAMPEAITRRLGEELGLTVRDLTLVLPRFRYRAVMGNGVVENEICPVFAAFTDDEPAPNREEVAGTAWADWSGFSAEVLAGTTDISPWCRQQVAELVELGANPAEWPAADPADLPDAAVIAAG.

The Mn(2+) site is built by His23 and His30. A Nudix hydrolase domain is found at 28-162; sequence PLHLAFSCYV…TTDISPWCRQ (135 aa). Residue Cys65 is part of the active site. Position 67 (His67) interacts with Mn(2+). Glu85 is a binding site for Mg(2+). Mn(2+)-binding residues include Glu112 and Glu114. Glu114 is a catalytic residue.

The protein belongs to the IPP isomerase type 1 family. The cofactor is Mg(2+). It depends on Mn(2+) as a cofactor.

It is found in the cytoplasm. The enzyme catalyses isopentenyl diphosphate = dimethylallyl diphosphate. Its pathway is isoprenoid biosynthesis; dimethylallyl diphosphate biosynthesis; dimethylallyl diphosphate from isopentenyl diphosphate: step 1/1. Catalyzes the 1,3-allylic rearrangement of the homoallylic substrate isopentenyl (IPP) to its highly electrophilic allylic isomer, dimethylallyl diphosphate (DMAPP). This Saccharopolyspora erythraea (strain ATCC 11635 / DSM 40517 / JCM 4748 / NBRC 13426 / NCIMB 8594 / NRRL 2338) protein is Isopentenyl-diphosphate Delta-isomerase.